Here is a 305-residue protein sequence, read N- to C-terminus: U6 small nuclear RNA (adenine-(43)-N(6))-methyltransferase (305 aa).

Residues Arg-85, Gly-110, Glu-133, Ser-164, and Asn-186 each coordinate S-adenosyl-L-methionine. A disordered region spans residues Ser-194–Gly-217.

The protein belongs to the methyltransferase superfamily. METTL16/RlmF family.

It carries out the reaction adenosine in U6 snRNA + S-adenosyl-L-methionine = N(6)-methyladenosine in U6 snRNA + S-adenosyl-L-homocysteine + H(+). RNA N6-methyltransferase that mediates N6-methylation of adenine of U6 small nuclear RNA (U6 snRNA). The sequence is that of U6 small nuclear RNA (adenine-(43)-N(6))-methyltransferase from Drosophila pseudoobscura pseudoobscura (Fruit fly).